The primary structure comprises 329 residues: Quinone oxidoreductase (329 aa).

Alanine 2 carries the N-acetylalanine modification. The residue at position 23 (lysine 23) is an N6-acetyllysine. NADP(+) is bound by residues tyrosine 53, 158–161, glycine 181, histidine 200, asparagine 229, 246–249, and 269–271; these read SGGV, VGSR, and VTL. Residue serine 248 is modified to Phosphoserine. Lysine 296 bears the N6-succinyllysine mark.

Belongs to the zinc-containing alcohol dehydrogenase family. Quinone oxidoreductase subfamily. Homotetramer. In terms of tissue distribution, only very low amounts in the lens.

It is found in the cytoplasm. The enzyme catalyses 2 a quinone + NADPH + H(+) = 2 a 1,4-benzosemiquinone + NADP(+). Functionally, does not have alcohol dehydrogenase activity. Binds NADP and acts through a one-electron transfer process. Orthoquinones, such as 1,2-naphthoquinone or 9,10-phenanthrenequinone, are the best substrates (in vitro). May act in the detoxification of xenobiotics. Interacts with (AU)-rich elements (ARE) in the 3'-UTR of target mRNA species. Enhances the stability of mRNA coding for BCL2. NADPH binding interferes with mRNA binding. The polypeptide is Quinone oxidoreductase (CRYZ) (Homo sapiens (Human)).